Consider the following 164-residue polypeptide: UPF0114 protein YqhA (164 aa).

The next 3 membrane-spanning stretches (helical) occupy residues 15 to 35 (LLAPVYFGLSLALIALALKFF), 53 to 73 (LILVLLSLVDMTLVGGLLVMV), and 136 to 156 (LMWYVIIHLTFVLSAFVMGYL).

It belongs to the UPF0114 family.

The protein resides in the cell membrane. This Escherichia coli O6:H1 (strain CFT073 / ATCC 700928 / UPEC) protein is UPF0114 protein YqhA.